A 222-amino-acid polypeptide reads, in one-letter code: Cytochrome b6 (222 aa).

The chain crosses the membrane as a helical span at residues 39-59; the sequence is IFYCLGGITLTCFIIQFATGF. C42 contacts heme c. Positions 93 and 107 each coordinate heme b. 3 helical membrane passes run 97 to 117, 123 to 143, and 193 to 213; these read ASMM…TGGF, LTWI…VTGY, and LHTF…FLMI. Positions 194 and 209 each coordinate heme b.

The protein belongs to the cytochrome b family. PetB subfamily. The 4 large subunits of the cytochrome b6-f complex are cytochrome b6, subunit IV (17 kDa polypeptide, PetD), cytochrome f and the Rieske protein, while the 4 small subunits are PetG, PetL, PetM and PetN. The complex functions as a dimer. Heme b is required as a cofactor. Requires heme c as cofactor.

It localises to the cellular thylakoid membrane. Component of the cytochrome b6-f complex, which mediates electron transfer between photosystem II (PSII) and photosystem I (PSI), cyclic electron flow around PSI, and state transitions. The polypeptide is Cytochrome b6 (petB) (Picosynechococcus sp. (strain ATCC 27264 / PCC 7002 / PR-6) (Agmenellum quadruplicatum)).